The sequence spans 608 residues: Isocitrate dehydrogenase kinase/phosphatase (608 aa).

ATP-binding positions include 328 to 334 and lysine 349; that span reads APGIKGL. The active site involves aspartate 384.

Belongs to the AceK family.

The protein resides in the cytoplasm. It carries out the reaction L-seryl-[isocitrate dehydrogenase] + ATP = O-phospho-L-seryl-[isocitrate dehydrogenase] + ADP + H(+). In terms of biological role, bifunctional enzyme which can phosphorylate or dephosphorylate isocitrate dehydrogenase (IDH) on a specific serine residue. This is a regulatory mechanism which enables bacteria to bypass the Krebs cycle via the glyoxylate shunt in response to the source of carbon. When bacteria are grown on glucose, IDH is fully active and unphosphorylated, but when grown on acetate or ethanol, the activity of IDH declines drastically concomitant with its phosphorylation. The protein is Isocitrate dehydrogenase kinase/phosphatase of Cupriavidus pinatubonensis (strain JMP 134 / LMG 1197) (Cupriavidus necator (strain JMP 134)).